Consider the following 302-residue polypeptide: Probable lipid kinase YegS-like (302 aa).

Residues 1 to 129 (MDKDKVLLVL…IDLGAVNGKL (129 aa)) enclose the DAGKc domain. ATP contacts are provided by residues Thr-39, 65–71 (GDGTLRE), and Thr-92. The Mg(2+) site is built by Arg-210, Asp-213, and Leu-215. Catalysis depends on Glu-268, which acts as the Proton acceptor.

Belongs to the diacylglycerol/lipid kinase family. YegS lipid kinase subfamily. The cofactor is Mg(2+). Requires Ca(2+) as cofactor.

The protein resides in the cytoplasm. Probably phosphorylates lipids; the in vivo substrate is unknown. In Pseudomonas aeruginosa (strain UCBPP-PA14), this protein is Probable lipid kinase YegS-like.